We begin with the raw amino-acid sequence, 358 residues long: Phosphoserine aminotransferase (358 aa).

Arg41 provides a ligand contact to L-glutamate. Residues Ala75–Ser76, Trp100, Thr148, Asp167, and Gln190 each bind pyridoxal 5'-phosphate. Lys191 is modified (N6-(pyridoxal phosphate)lysine). Asn233–Thr234 serves as a coordination point for pyridoxal 5'-phosphate.

It belongs to the class-V pyridoxal-phosphate-dependent aminotransferase family. SerC subfamily. Homodimer. The cofactor is pyridoxal 5'-phosphate.

The protein localises to the cytoplasm. It carries out the reaction O-phospho-L-serine + 2-oxoglutarate = 3-phosphooxypyruvate + L-glutamate. The catalysed reaction is 4-(phosphooxy)-L-threonine + 2-oxoglutarate = (R)-3-hydroxy-2-oxo-4-phosphooxybutanoate + L-glutamate. It participates in amino-acid biosynthesis; L-serine biosynthesis; L-serine from 3-phospho-D-glycerate: step 2/3. It functions in the pathway cofactor biosynthesis; pyridoxine 5'-phosphate biosynthesis; pyridoxine 5'-phosphate from D-erythrose 4-phosphate: step 3/5. Its function is as follows. Catalyzes the reversible conversion of 3-phosphohydroxypyruvate to phosphoserine and of 3-hydroxy-2-oxo-4-phosphonooxybutanoate to phosphohydroxythreonine. The polypeptide is Phosphoserine aminotransferase (Campylobacter lari (strain RM2100 / D67 / ATCC BAA-1060)).